The primary structure comprises 430 residues: DNA polymerase IV 1 (430 aa).

The UmuC domain occupies 45-225; the sequence is LAHIDCDAFY…KPVTLIWGVG (181 aa). D49 and D142 together coordinate Mg(2+). E143 is a catalytic residue.

It belongs to the DNA polymerase type-Y family. Monomer. It depends on Mg(2+) as a cofactor.

It localises to the cytoplasm. It catalyses the reaction DNA(n) + a 2'-deoxyribonucleoside 5'-triphosphate = DNA(n+1) + diphosphate. Poorly processive, error-prone DNA polymerase involved in untargeted mutagenesis. Copies undamaged DNA at stalled replication forks, which arise in vivo from mismatched or misaligned primer ends. These misaligned primers can be extended by PolIV. Exhibits no 3'-5' exonuclease (proofreading) activity. May be involved in translesional synthesis, in conjunction with the beta clamp from PolIII. This chain is DNA polymerase IV 1 (dinB1), found in Rhizobium meliloti (strain 1021) (Ensifer meliloti).